A 552-amino-acid chain; its full sequence is Glutamine--tRNA ligase (552 aa).

A 'HIGH' region motif is present at residues 34–44 (PEPNGYLHIGH). ATP-binding positions include 35-37 (EPN) and 41-47 (HIGHAKS). L-glutamine is bound by residues Asp67 and Tyr212. Residues Thr231, 261 to 262 (RL), and 269 to 271 (MSK) contribute to the ATP site. The 'KMSKS' region signature appears at 268–272 (VMSKR).

It belongs to the class-I aminoacyl-tRNA synthetase family. In terms of assembly, monomer.

It is found in the cytoplasm. The enzyme catalyses tRNA(Gln) + L-glutamine + ATP = L-glutaminyl-tRNA(Gln) + AMP + diphosphate. This is Glutamine--tRNA ligase from Aliivibrio fischeri (strain MJ11) (Vibrio fischeri).